The sequence spans 742 residues: Zinc finger MYND domain-containing protein 15 (742 aa).

Residues 109-199 (LEDGEEGEEE…QKRKGQRSEA (91 aa)) form a disordered region. The segment covering 110–127 (EDGEEGEEEEEEDEEEEK) has biased composition (acidic residues). Over residues 151 to 161 (SRESPQETNPP) the composition is skewed to polar residues. Over residues 166 to 189 (EAAREAGGGKDGCREDRVENETRP) the composition is skewed to basic and acidic residues. Positions 313, 316, 328, 331, 337, 341, 355, and 359 each coordinate Zn(2+). An MYND-type zinc finger spans residues 313–359 (CHVCHRHSFEAKLTPCPQCSAVLYCGEACLRADWQRCPDDVSHRFWC). 2 disordered regions span residues 565–590 (EVSV…GRRD) and 701–742 (QGSG…RRRK). The segment covering 708-724 (APGPPPPSPTPSAPPAP) has biased composition (pro residues). Positions 725–742 (TRRRRGEKKPGRGARRRK) are enriched in basic residues.

Interacts with HDAC1, HDAC3, HDAC6 and, to a lesser extent, with HDAC7.

The protein resides in the nucleus. Its subcellular location is the cytoplasm. In terms of biological role, acts as a transcriptional repressor through interaction with histone deacetylases (HDACs). May be important for spermiogenesis. This is Zinc finger MYND domain-containing protein 15 (ZMYND15) from Homo sapiens (Human).